The following is a 254-amino-acid chain: NH(3)-dependent NAD(+) synthetase (254 aa).

Residue 32 to 39 participates in ATP binding; sequence GISGGIDS. Asp-38 contacts Mg(2+). Arg-113 contributes to the deamido-NAD(+) binding site. An ATP-binding site is contributed by Thr-133. Glu-138 contacts Mg(2+). Deamido-NAD(+) contacts are provided by Lys-146 and Asp-153. ATP is bound by residues Lys-162 and Thr-184. 244-245 is a binding site for deamido-NAD(+); sequence HK.

Belongs to the NAD synthetase family. Homodimer.

The catalysed reaction is deamido-NAD(+) + NH4(+) + ATP = AMP + diphosphate + NAD(+) + H(+). Its pathway is cofactor biosynthesis; NAD(+) biosynthesis; NAD(+) from deamido-NAD(+) (ammonia route): step 1/1. Functionally, catalyzes the ATP-dependent amidation of deamido-NAD to form NAD. Uses ammonia as a nitrogen source. The protein is NH(3)-dependent NAD(+) synthetase of Thermococcus kodakarensis (strain ATCC BAA-918 / JCM 12380 / KOD1) (Pyrococcus kodakaraensis (strain KOD1)).